The following is a 259-amino-acid chain: Phosphate import ATP-binding protein PstB (259 aa).

An ABC transporter domain is found at 6–254; that stretch reads SKNESVVFDV…PKDKRTEDYI (249 aa). 45-52 contributes to the ATP binding site; that stretch reads GPSGCGKS.

The protein belongs to the ABC transporter superfamily. Phosphate importer (TC 3.A.1.7) family. The complex is composed of two ATP-binding proteins (PstB), two transmembrane proteins (PstC and PstA) and a solute-binding protein (PstS).

The protein resides in the cell membrane. It catalyses the reaction phosphate(out) + ATP + H2O = ADP + 2 phosphate(in) + H(+). Its function is as follows. Part of the ABC transporter complex PstSACB involved in phosphate import. Responsible for energy coupling to the transport system. This chain is Phosphate import ATP-binding protein PstB, found in Desulfitobacterium hafniense (strain Y51).